We begin with the raw amino-acid sequence, 359 residues long: Histidinol-phosphate aminotransferase (359 aa).

The residue at position 217 (K217) is an N6-(pyridoxal phosphate)lysine.

Belongs to the class-II pyridoxal-phosphate-dependent aminotransferase family. Histidinol-phosphate aminotransferase subfamily. As to quaternary structure, homodimer. Requires pyridoxal 5'-phosphate as cofactor.

It carries out the reaction L-histidinol phosphate + 2-oxoglutarate = 3-(imidazol-4-yl)-2-oxopropyl phosphate + L-glutamate. It participates in amino-acid biosynthesis; L-histidine biosynthesis; L-histidine from 5-phospho-alpha-D-ribose 1-diphosphate: step 7/9. The protein is Histidinol-phosphate aminotransferase of Salmonella heidelberg (strain SL476).